Consider the following 112-residue polypeptide: Nitrogen regulatory protein P-II 1 (112 aa).

An O-UMP-tyrosine modification is found at Y51.

It belongs to the P(II) protein family. As to quaternary structure, homotrimer. In terms of processing, uridylylated/deuridylylated by GlnD.

Functionally, P-II indirectly controls the transcription of the glutamine synthetase gene (GlnA). P-II prevents NR-II-catalyzed conversion of NR-I to NR-I-phosphate, the transcriptional activator of GlnA. When P-II is uridylylated to P-II-UMP, these events are reversed. When the ratio of Gln to 2-ketoglutarate decreases, P-II is uridylylated to P-II-UMP, which causes the deadenylation of glutamine synthetase by GlnE, so activating the enzyme. This chain is Nitrogen regulatory protein P-II 1 (glnB), found in Escherichia coli O157:H7.